Consider the following 398-residue polypeptide: AT-rich interactive domain-containing protein 6 (398 aa).

The disordered stretch occupies residues 25 to 87 (EPLEPENDHN…PKTEGENAKK (63 aa)). Residues 106 to 197 (PVEQVAFLRE…ALLEYEKCLR (92 aa)) enclose the ARID domain. The segment at 213 to 236 (SSVEKEPSSHQGSGSGRARRDSAA) is disordered. The 94-residue stretch at 305-398 (VGPVADWVKI…RLFIRVPFEQ (94 aa)) folds into the sHSP domain.

Belongs to the small heat shock protein (HSP20) family.

The protein localises to the nucleus. The polypeptide is AT-rich interactive domain-containing protein 6 (ARID6) (Arabidopsis thaliana (Mouse-ear cress)).